A 217-amino-acid chain; its full sequence is Pyrophosphatase PpaX (217 aa).

The Nucleophile role is filled by aspartate 11.

Belongs to the HAD-like hydrolase superfamily. PpaX family. Mg(2+) is required as a cofactor.

The catalysed reaction is diphosphate + H2O = 2 phosphate + H(+). Functionally, hydrolyzes pyrophosphate formed during P-Ser-HPr dephosphorylation by HPrK/P. Might play a role in controlling the intracellular pyrophosphate pool. This chain is Pyrophosphatase PpaX, found in Listeria monocytogenes serotype 4b (strain CLIP80459).